We begin with the raw amino-acid sequence, 347 residues long: Sulfate/thiosulfate import ATP-binding protein CysA 1 (347 aa).

Positions 3–237 constitute an ABC transporter domain; that stretch reads VRVESLRKEF…PVSPFVYGFI (235 aa). 35–42 contributes to the ATP binding site; it reads GPSGSGKT.

This sequence belongs to the ABC transporter superfamily. Sulfate/tungstate importer (TC 3.A.1.6) family. As to quaternary structure, the complex is composed of two ATP-binding proteins (CysA), two transmembrane proteins (CysT and CysW) and a solute-binding protein (CysP).

Its subcellular location is the cell inner membrane. It catalyses the reaction sulfate(out) + ATP + H2O = sulfate(in) + ADP + phosphate + H(+). It carries out the reaction thiosulfate(out) + ATP + H2O = thiosulfate(in) + ADP + phosphate + H(+). In terms of biological role, part of the ABC transporter complex CysAWTP involved in sulfate/thiosulfate import. Responsible for energy coupling to the transport system. In Rhizobium meliloti (strain 1021) (Ensifer meliloti), this protein is Sulfate/thiosulfate import ATP-binding protein CysA 1.